A 145-amino-acid chain; its full sequence is Large ribosomal subunit protein uL13 (145 aa).

This sequence belongs to the universal ribosomal protein uL13 family. As to quaternary structure, part of the 50S ribosomal subunit.

In terms of biological role, this protein is one of the early assembly proteins of the 50S ribosomal subunit, although it is not seen to bind rRNA by itself. It is important during the early stages of 50S assembly. The sequence is that of Large ribosomal subunit protein uL13 from Staphylococcus carnosus (strain TM300).